The primary structure comprises 285 residues: uncharacterized protein (285 aa).

The helical transmembrane segment at 197–217 threads the bilayer; it reads PTIGALLSLVSAFFSFIPFLM.

The protein resides in the membrane. This is an uncharacterized protein from Saccharomyces cerevisiae (strain ATCC 204508 / S288c) (Baker's yeast).